Reading from the N-terminus, the 124-residue chain is Large ribosomal subunit protein bL12 (124 aa).

Positions 101-115 are enriched in basic and acidic residues; it reads ALSKDDAEKAKKELE. Positions 101–124 are disordered; that stretch reads ALSKDDAEKAKKELEEAGATVELK.

The protein belongs to the bacterial ribosomal protein bL12 family. Homodimer. Part of the ribosomal stalk of the 50S ribosomal subunit. Forms a multimeric L10(L12)X complex, where L10 forms an elongated spine to which 2 to 4 L12 dimers bind in a sequential fashion. Binds GTP-bound translation factors.

In terms of biological role, forms part of the ribosomal stalk which helps the ribosome interact with GTP-bound translation factors. Is thus essential for accurate translation. The sequence is that of Large ribosomal subunit protein bL12 from Hahella chejuensis (strain KCTC 2396).